A 368-amino-acid polypeptide reads, in one-letter code: MNLPIEQYADLLAEKAKNLTALLAPFNPPELEVFESETSHFRMRAEFRVWHDTNEVGENELYHIMFDQETKQRYRVDQFPIANHLINKMMSSLLAEIKGNELLTRKLFQVDYLSTLSGEIAVSMLYHKKLNEEWQAEAAALKARLEHQGFKVQILGRATKQKIALDRDYVEEVLPVDGRNLIYRQVENSFTQPNAKMNIKMLEWARSCTRHSSGDLLELYCGNGNFSIALAENFRKVLATEISKSSVQSAQYNIEQNGIDNLQIIRMSAEEFTQAMNGVREFNRLKGIDLKAYDCNTIFVDPPRAGLDQDTLNMVQAYERILYISCNPHTLADNLQQLTQTHRIERAALFDQFPYTHHVESGVWLIRK.

The S-adenosyl-L-methionine site is built by Q192, Y220, N225, E241, and D301. Residue C326 is the Nucleophile of the active site. E360 acts as the Proton acceptor in catalysis.

Belongs to the class I-like SAM-binding methyltransferase superfamily. RNA M5U methyltransferase family. TrmA subfamily.

The catalysed reaction is uridine(54) in tRNA + S-adenosyl-L-methionine = 5-methyluridine(54) in tRNA + S-adenosyl-L-homocysteine + H(+). It catalyses the reaction uridine(341) in tmRNA + S-adenosyl-L-methionine = 5-methyluridine(341) in tmRNA + S-adenosyl-L-homocysteine + H(+). Functionally, dual-specificity methyltransferase that catalyzes the formation of 5-methyluridine at position 54 (m5U54) in all tRNAs, and that of position 341 (m5U341) in tmRNA (transfer-mRNA). This is tRNA/tmRNA (uracil-C(5))-methyltransferase from Actinobacillus pleuropneumoniae serotype 3 (strain JL03).